A 103-amino-acid chain; its full sequence is Large ribosomal subunit protein bL21 (103 aa).

It belongs to the bacterial ribosomal protein bL21 family. In terms of assembly, part of the 50S ribosomal subunit. Contacts protein L20.

Its function is as follows. This protein binds to 23S rRNA in the presence of protein L20. The sequence is that of Large ribosomal subunit protein bL21 from Thiobacillus denitrificans (strain ATCC 25259 / T1).